Here is a 293-residue protein sequence, read N- to C-terminus: Ribosomal protein L11 methyltransferase (293 aa).

S-adenosyl-L-methionine contacts are provided by T145, G166, D188, and N230.

This sequence belongs to the methyltransferase superfamily. PrmA family.

The protein localises to the cytoplasm. It catalyses the reaction L-lysyl-[protein] + 3 S-adenosyl-L-methionine = N(6),N(6),N(6)-trimethyl-L-lysyl-[protein] + 3 S-adenosyl-L-homocysteine + 3 H(+). Methylates ribosomal protein L11. The protein is Ribosomal protein L11 methyltransferase of Citrobacter koseri (strain ATCC BAA-895 / CDC 4225-83 / SGSC4696).